The primary structure comprises 346 residues: Histidinol-phosphate aminotransferase (346 aa).

At lysine 209 the chain carries N6-(pyridoxal phosphate)lysine.

This sequence belongs to the class-II pyridoxal-phosphate-dependent aminotransferase family. Histidinol-phosphate aminotransferase subfamily. Homodimer. The cofactor is pyridoxal 5'-phosphate.

The catalysed reaction is L-histidinol phosphate + 2-oxoglutarate = 3-(imidazol-4-yl)-2-oxopropyl phosphate + L-glutamate. It functions in the pathway amino-acid biosynthesis; L-histidine biosynthesis; L-histidine from 5-phospho-alpha-D-ribose 1-diphosphate: step 7/9. This chain is Histidinol-phosphate aminotransferase, found in Flavobacterium psychrophilum (strain ATCC 49511 / DSM 21280 / CIP 103535 / JIP02/86).